The chain runs to 1296 residues: Phosphoribosylformylglycinamidine synthase (1296 aa).

Residues 300 to 325 (APFSGAATGSGGEIRDEGATGRGSKP) are disordered. ATP contacts are provided by residues 304-315 (GAATGSGGEIRD) and Ala675. Positions 715, 719, and 885 each coordinate Mg(2+). Residue Ser887 coordinates ATP. Positions 1043–1296 (MAILREQGVN…MFRNARKNVG (254 aa)) constitute a Glutamine amidotransferase type-1 domain. Cys1136 (nucleophile) is an active-site residue. The tract at residues 1232–1253 (TQYPANPNGSPEGITGITSTDG) is disordered. Active-site residues include His1261 and Glu1263.

The protein in the N-terminal section; belongs to the FGAMS family. In terms of assembly, monomer.

Its subcellular location is the cytoplasm. The enzyme catalyses N(2)-formyl-N(1)-(5-phospho-beta-D-ribosyl)glycinamide + L-glutamine + ATP + H2O = 2-formamido-N(1)-(5-O-phospho-beta-D-ribosyl)acetamidine + L-glutamate + ADP + phosphate + H(+). Its pathway is purine metabolism; IMP biosynthesis via de novo pathway; 5-amino-1-(5-phospho-D-ribosyl)imidazole from N(2)-formyl-N(1)-(5-phospho-D-ribosyl)glycinamide: step 1/2. Its function is as follows. Phosphoribosylformylglycinamidine synthase involved in the purines biosynthetic pathway. Catalyzes the ATP-dependent conversion of formylglycinamide ribonucleotide (FGAR) and glutamine to yield formylglycinamidine ribonucleotide (FGAM) and glutamate. The chain is Phosphoribosylformylglycinamidine synthase from Pseudoalteromonas translucida (strain TAC 125).